Here is a 535-residue protein sequence, read N- to C-terminus: Calcium-dependent protein kinase 5 (535 aa).

The interval 1 to 46 (MGNACRGSFGGKTFQGYPQPQDHSESNSNPKHNSDSPKPKKEQQPL) is disordered. The N-myristoyl glycine moiety is linked to residue glycine 2. Cysteine 5 carries S-palmitoyl cysteine lipidation. Residues 32–43 (HNSDSPKPKKEQ) show a composition bias toward basic and acidic residues. Residues 72–330 (YTLGRKLGQG…AHEVLCHPWI (259 aa)) form the Protein kinase domain. Residues 78 to 86 (LGQGQFGTT) and lysine 101 contribute to the ATP site. Aspartate 196 acts as the Proton acceptor in catalysis. An autoinhibitory domain region spans residues 336 to 366 (APDRALDPAVLSRLKHFSAMNKLKKMALRVI). EF-hand domains follow at residues 373 to 408 (EEIAGLKEMFKAMDTDNSGAITFDELKAGLRKYGST), 409 to 444 (LKDIEIRELMDAADVDNSGTIDYGEFIAATIHLNKL), 445 to 480 (DREEHLMAAFQYFDKDGSGYITVDELQQACADHNIT), and 484 to 514 (FEDIIREVDQDNDGRIDYGEFVAMMQKGNPC). Ca(2+) is bound by residues aspartate 386, aspartate 388, serine 390, glutamate 397, aspartate 422, aspartate 424, serine 426, threonine 428, glutamate 433, aspartate 458, aspartate 460, serine 462, tyrosine 464, glutamate 469, aspartate 492, aspartate 494, aspartate 496, arginine 498, and glutamate 503.

Belongs to the protein kinase superfamily. Ser/Thr protein kinase family. CDPK subfamily.

Its subcellular location is the cell membrane. The catalysed reaction is L-seryl-[protein] + ATP = O-phospho-L-seryl-[protein] + ADP + H(+). It catalyses the reaction L-threonyl-[protein] + ATP = O-phospho-L-threonyl-[protein] + ADP + H(+). Activated by calcium. Autophosphorylation may play an important role in the regulation of the kinase activity. Its function is as follows. Regulates the production of reactive oxygen species (ROS) by NADPH oxidase. The protein is Calcium-dependent protein kinase 5 (CPK5) of Solanum tuberosum (Potato).